The sequence spans 258 residues: Phosphoprotein ECPP44 (258 aa).

Disordered regions lie at residues 1 to 25 (MASD…DRGL), 46 to 131 (EKVQ…PVEV), and 148 to 175 (KLPG…VDCA). Basic and acidic residues-rich tracts occupy residues 11–25 (SVEK…DRGL), 46–80 (EKVQ…EKLH), 109–124 (GLKE…KEED), and 148–158 (KLPGGGKKVEE).

The protein belongs to the plant dehydrin family. Phosphorylated in embryogenic and somatic embryos. Not phosphorylated in non-embryogenic cells.

In terms of biological role, phosphorylation of ECCP44 protein is thought to be involved in the acquisition of embryogenic competence. Unlike other dehydrins, it is not thought to function as an environmental stress tolerant. The sequence is that of Phosphoprotein ECPP44 (ECPP44) from Daucus carota (Wild carrot).